The following is a 540-amino-acid chain: DNA-(apurinic or apyrimidinic site) endonuclease (540 aa).

Mg(2+)-binding residues include N206 and E239. The disordered stretch occupies residues 256-276 (NNKVYGGKKNEGEERNRGSVK). The segment covering 263 to 276 (KKNEGEERNRGSVK) has biased composition (basic and acidic residues). Mg(2+) is bound by residues D400, N402, D530, and H531. H531 serves as the catalytic Proton acceptor.

Belongs to the DNA repair enzymes AP/ExoA family. Mg(2+) is required as a cofactor. The cofactor is Mn(2+). May be proteolytically cleaved.

Its subcellular location is the mitochondrion. The catalysed reaction is Exonucleolytic cleavage in the 3'- to 5'-direction to yield nucleoside 5'-phosphates.. Functionally, multifunctional protein that plays a central role in mitochondrial DNA base excision repair pathway induced by oxidative stress. Has apurinic/apyrimidinic (AP) endonuclease activity towards double-stranded DNA (dsDNA). Has nucleotide incision repair (NIR) activity; acts on dsDNA with oxidized bases thymine glycol and 5,6-dihydro-2'-deoxyuridine. Has 3'-5' exonuclease; can use dsDNA templates with 3'-OH termini including blunt-end, gapped and mismatched 3'-recessed. Has 3'-phosphatase activity; cleaves 3'-phosphate from blunt, recessed and gapped dsDNA templates, followed by 3'-5' exonuclease activity. Has RNase H-like activity; cleaves RNA on 3'-recessed RNA-DNA duplex. Plays a role in merosome infection of host erythrocytes. The chain is DNA-(apurinic or apyrimidinic site) endonuclease from Plasmodium berghei (strain Anka).